The chain runs to 342 residues: DNA-directed RNA polymerase subunit alpha (342 aa).

The interval 1–238 (MESLNVNAKN…DQLNMFVNFD (238 aa)) is alpha N-terminal domain (alpha-NTD). Residues 254–342 (FNKNLLRKVD…EMSKKLEEQI (89 aa)) are alpha C-terminal domain (alpha-CTD).

The protein belongs to the RNA polymerase alpha chain family. As to quaternary structure, homodimer. The RNAP catalytic core consists of 2 alpha, 1 beta, 1 beta' and 1 omega subunit. When a sigma factor is associated with the core the holoenzyme is formed, which can initiate transcription.

It catalyses the reaction RNA(n) + a ribonucleoside 5'-triphosphate = RNA(n+1) + diphosphate. In terms of biological role, DNA-dependent RNA polymerase catalyzes the transcription of DNA into RNA using the four ribonucleoside triphosphates as substrates. The chain is DNA-directed RNA polymerase subunit alpha from Pelagibacter ubique (strain HTCC1062).